The primary structure comprises 461 residues: Na(+)/H(+) antiporter NhaA (461 aa).

Positions 1-23 (MILSTQRLGRFMSPAPTPAPDAK) are disordered. Transmembrane regions (helical) follow at residues 48–68 (VGGA…NSPV), 89–109 (LSLG…LVGL), 127–147 (IVPV…YAAV), 157–177 (GWAI…AIIG), 186–206 (IFLL…IAFF), 211–231 (IQAA…FLAQ), 236–256 (FFGA…IVTW), 257–277 (ALVH…GFAV), 305–325 (ISAG…AVGG), 339–359 (IGII…TTWI), 374–394 (WIDV…SLLV), and 408–428 (HAKV…TVVL).

It belongs to the NhaA Na(+)/H(+) (TC 2.A.33) antiporter family.

It is found in the cell membrane. The catalysed reaction is Na(+)(in) + 2 H(+)(out) = Na(+)(out) + 2 H(+)(in). Na(+)/H(+) antiporter that extrudes sodium in exchange for external protons. This Arthrobacter sp. (strain FB24) protein is Na(+)/H(+) antiporter NhaA.